Here is a 145-residue protein sequence, read N- to C-terminus: Bacilliredoxin SAR1441 (145 aa).

It belongs to the bacilliredoxin family.

This Staphylococcus aureus (strain MRSA252) protein is Bacilliredoxin SAR1441.